Consider the following 973-residue polypeptide: Ras-related protein Rab-44 (973 aa).

Basic residues predominate over residues 1–21 (MEKGKGVSRKGRKLASSRRRQ). Residues 1-42 (MEKGKGVSRKGRKLASSRRRQAREPADGQDAPVAAEAESWPS) form a disordered region. One can recognise an EF-hand domain in the interval 77 to 111 (GGEEPQMIFDWVDVESRGHLSLEEFSSGLKNVFGS). The tract at residues 112–140 (SPGTHRLRTKRSLPSQRESVTSTLPVPEE) is disordered. Over residues 123–135 (SLPSQRESVTSTL) the composition is skewed to polar residues. Positions 219-310 (LYKVRQLYEE…ERDLAGQLEE (92 aa)) form a coiled coil. Disordered stretches follow at residues 319 to 368 (RGHL…FGNN), 421 to 481 (FSQE…GSFL), 493 to 708 (GTVE…GLAV), and 724 to 779 (EAQP…GKPQ). A compositionally biased stretch (pro residues) spans 428–440 (DPDPGPRGSPEVP). Residues 445–457 (KDGKGVEDPKGQD) show a composition bias toward basic and acidic residues. The span at 513 to 524 (GLSSSPQSPAGS) shows a compositional bias: low complexity. Composition is skewed to basic and acidic residues over residues 548–559 (SLEREVMAEDLK), 598–608 (HLARQESHAKG), and 654–663 (SESHGLEARS). Polar residues predominate over residues 665-680 (ESPQQDDPLPNTSQPP). Residues 750–766 (AESRPEDPRTDLQEAER) show a composition bias toward basic and acidic residues. GTP is bound by residues 792–799 (GDSNVGKT), 840–844 (DTAGQ), and 898–901 (NKMD). 2 S-geranylgeranyl cysteine lipidation sites follow: Cys971 and Cys972.

This sequence belongs to the small GTPase superfamily. Rab family.

Its subcellular location is the cell membrane. This is Ras-related protein Rab-44 (Rab44) from Mus musculus (Mouse).